The following is a 117-amino-acid chain: Small ribosomal subunit protein bS6 (117 aa).

Residues 96–117 (HAEGPSVQMQKRDERDNRRERR) are disordered. The span at 105-117 (QKRDERDNRRERR) shows a compositional bias: basic and acidic residues.

Belongs to the bacterial ribosomal protein bS6 family.

Functionally, binds together with bS18 to 16S ribosomal RNA. This Ruegeria sp. (strain TM1040) (Silicibacter sp.) protein is Small ribosomal subunit protein bS6.